Consider the following 224-residue polypeptide: 7-cyano-7-deazaguanine synthase (224 aa).

ATP is bound at residue 12–22 (LSGGLDSSTVT). 4 residues coordinate Zn(2+): C193, C201, C204, and C207.

It belongs to the QueC family. It depends on Zn(2+) as a cofactor.

It catalyses the reaction 7-carboxy-7-deazaguanine + NH4(+) + ATP = 7-cyano-7-deazaguanine + ADP + phosphate + H2O + H(+). It functions in the pathway purine metabolism; 7-cyano-7-deazaguanine biosynthesis. Functionally, catalyzes the ATP-dependent conversion of 7-carboxy-7-deazaguanine (CDG) to 7-cyano-7-deazaguanine (preQ(0)). The sequence is that of 7-cyano-7-deazaguanine synthase from Prochlorococcus marinus subsp. pastoris (strain CCMP1986 / NIES-2087 / MED4).